Reading from the N-terminus, the 798-residue chain is Protocadherin beta-14 (798 aa).

The N-terminal stretch at 1–26 (MEIRGALDLRKRQVLIFLVLLGLSRA) is a signal peptide. Topologically, residues 27–686 (GTESAHYSVA…APAQAQADSL (660 aa)) are extracellular. 5 Cadherin domains span residues 35-133 (VAEE…SPTF), 138-242 (ILIK…APEF), 247-347 (YEVQ…PPEV), 352-451 (ITKR…APAF), and 456-561 (YTLF…SPFV). Cys-96 and Cys-102 are disulfide-bonded. Asn-169 carries N-linked (GlcNAc...) asparagine glycosylation. 3 N-linked (GlcNAc...) asparagine glycosylation sites follow: Asn-359, Asn-418, and Asn-436. Asn-567 carries N-linked (GlcNAc...) asparagine glycosylation. Residues 568–671 (GSAPCTELVP…LVDGFSQPYL (104 aa)) form the Cadherin 6 domain. The chain crosses the membrane as a helical span at residues 687–711 (TVYLVVALASVSSLFLFSVLLFVAV). The Cytoplasmic segment spans residues 712–798 (RLCRRSRAAS…FRNSFGLNIQ (87 aa)).

It localises to the cell membrane. Functionally, potential calcium-dependent cell-adhesion protein. May be involved in the establishment and maintenance of specific neuronal connections in the brain. The polypeptide is Protocadherin beta-14 (PCDHB14) (Pan troglodytes (Chimpanzee)).